Consider the following 330-residue polypeptide: Peroxisomal membrane protein PEX13 (330 aa).

The segment covering 1 to 14 (MSAPPTNQPPPLPP) has biased composition (pro residues). The disordered stretch occupies residues 1-20 (MSAPPTNQPPPLPPRSFDNQ). Residues 193-213 (ASVNWPAALFWVVAIGGPWLI) form a helical membrane-spanning segment. The region spanning 235–300 (APHYTAQALF…PINYVRIVGK (66 aa)) is the SH3 domain.

Belongs to the peroxin-13 family. Interacts with PEX14/prx-14; forming the PEX13-PEX14 docking complex.

The protein localises to the peroxisome membrane. Its function is as follows. Component of the PEX13-PEX14 docking complex, a translocon channel that specifically mediates the import of peroxisomal cargo proteins bound to PEX5/prx-5 receptor. The PEX13-PEX14 docking complex forms a large import pore which can be opened to a diameter of about 9 nm. Mechanistically, PEX5/prx-5 receptor along with cargo proteins associates with the PEX14/prx-14 subunit of the PEX13-PEX14 docking complex in the cytosol, leading to the insertion of the receptor into the organelle membrane with the concomitant translocation of the cargo into the peroxisome matrix. The sequence is that of Peroxisomal membrane protein PEX13 (prx-13) from Caenorhabditis elegans.